A 458-amino-acid polypeptide reads, in one-letter code: D-inositol 3-phosphate glycosyltransferase (458 aa).

The segment at 1 to 29 (MRADRPGHRSRGINPGPGMFTLVGPDERD) is disordered. 1D-myo-inositol 3-phosphate is bound at residue His-47. Residues 53–54 (QP) and Gly-61 each bind UDP-N-acetyl-alpha-D-glucosamine. Residues 58–63 (DAGGMN), Lys-116, Tyr-149, Thr-173, and Arg-193 contribute to the 1D-myo-inositol 3-phosphate site. Positions 267, 272, and 339 each coordinate UDP-N-acetyl-alpha-D-glucosamine. Ala-351 is a binding site for Mg(2+). UDP-N-acetyl-alpha-D-glucosamine is bound by residues Glu-361 and Glu-369. Thr-375 is a Mg(2+) binding site.

This sequence belongs to the glycosyltransferase group 1 family. MshA subfamily. Homodimer.

The enzyme catalyses 1D-myo-inositol 3-phosphate + UDP-N-acetyl-alpha-D-glucosamine = 1D-myo-inositol 2-acetamido-2-deoxy-alpha-D-glucopyranoside 3-phosphate + UDP + H(+). Catalyzes the transfer of a N-acetyl-glucosamine moiety to 1D-myo-inositol 3-phosphate to produce 1D-myo-inositol 2-acetamido-2-deoxy-glucopyranoside 3-phosphate in the mycothiol biosynthesis pathway. The sequence is that of D-inositol 3-phosphate glycosyltransferase from Nocardioides sp. (strain ATCC BAA-499 / JS614).